The primary structure comprises 415 residues: Protein CDC73 homolog (415 aa).

It belongs to the CDC73 family. As to quaternary structure, component of the nuclear PAF1 complex (PAF1C), which consists of VIP2/ELF7/PAF1, VIP3/SKI8/WDR61, VIP4/LEO1, VIP5/RTF1, VIP6/ELF8/CTR9 and CDC73. Expressed in root tips, shoot apex, young leaves and flowers, especially in stamen filaments and carpels.

It localises to the nucleus. Functionally, component of the PAF1 complex (PAF1C) which is involved in histone modifications such as methylation on histone H3 'Lys-4' (H3K4me3). Involved in regulation of flowering time. Required for the expression of the flowering repressors FLC and MADS-box genes of the MAF family. Required for histone H3 trimethylation on 'Lys-4' (H3K4me3) at the FLC locus. Prevents trimethylation on 'Lys-27' (H3K27me3) at the same locus. This is Protein CDC73 homolog from Arabidopsis thaliana (Mouse-ear cress).